An 810-amino-acid chain; its full sequence is S-adenosyl-L-methionine-dependent tRNA 4-demethylwyosine synthase (810 aa).

Disordered regions lie at residues 86–116 (NGGG…KGGC) and 156–176 (RSST…VGKK). Over residues 104–116 (GCCSSKGGKKGGC) the composition is skewed to low complexity. Positions 159-172 (TPKVFSKNSSSNSR) are enriched in polar residues. The 156-residue stretch at 205–360 (IYVLYSSLQG…KIDEWTSLLA (156 aa)) folds into the Flavodoxin-like domain. FMN-binding positions include 211-215 (SLQGA) and 304-337 (VLGL…RRIF). The segment covering 374 to 397 (DENADSEEDEEEGNGSDELGDVED) has biased composition (acidic residues). Positions 374–407 (DENADSEEDEEEGNGSDELGDVEDIGGKGSNGKF) are disordered. The region spanning 463-713 (FNIASSRCME…ELQRRGLHYD (251 aa)) is the Radical SAM core domain. C479, C483, and C486 together coordinate [4Fe-4S] cluster. K496 is covalently cross-linked (Glycyl lysine isopeptide (Lys-Gly) (interchain with G-Cter in ubiquitin)). The tract at residues 782-810 (RVYRKDKKKQNKENQETTTRETPLPPIPA) is disordered.

This sequence belongs to the TYW1 family. [4Fe-4S] cluster serves as cofactor.

It is found in the endoplasmic reticulum. The catalysed reaction is N(1)-methylguanosine(37) in tRNA(Phe) + pyruvate + S-adenosyl-L-methionine = 4-demethylwyosine(37) in tRNA(Phe) + 5'-deoxyadenosine + L-methionine + CO2 + H2O. It functions in the pathway tRNA modification; wybutosine-tRNA(Phe) biosynthesis. Functionally, component of the wybutosine biosynthesis pathway. Wybutosine is a hyper modified guanosine with a tricyclic base found at the 3'-position adjacent to the anticodon of eukaryotic phenylalanine tRNA. Catalyzes the condensation of N-methylguanine with 2 carbon atoms from pyruvate to form the tricyclic 4-demethylwyosine, an intermediate in wybutosine biosynthesis. This chain is S-adenosyl-L-methionine-dependent tRNA 4-demethylwyosine synthase (TYW1), found in Saccharomyces cerevisiae (strain ATCC 204508 / S288c) (Baker's yeast).